The primary structure comprises 280 residues: Golgi phosphoprotein 3-like A (280 aa).

The interval 1–32 (MTTLIRRGRRAEEGQERRADSEDSIKDKDEEE) is disordered. Over residues 10 to 32 (RAEEGQERRADSEDSIKDKDEEE) the composition is skewed to basic and acidic residues. The a 1,2-diacyl-sn-glycero-3-phospho-(1D-myo-inositol 4-phosphate) site is built by tryptophan 62, arginine 71, arginine 152, and arginine 155. The interval 171-182 (EKQNFLLFDMTT) is beta-hairpin required for oligomerization.

It belongs to the GOLPH3/VPS74 family. Homooligomer.

The protein localises to the golgi apparatus. The protein resides in the golgi stack membrane. Its subcellular location is the trans-Golgi network membrane. Its function is as follows. Phosphatidylinositol-4-phosphate-binding protein that may play a role in the process of vesicle budding at the Golgi and anterograde transport to the plasma membrane. The polypeptide is Golgi phosphoprotein 3-like A (golph3l-a) (Xenopus laevis (African clawed frog)).